Here is a 307-residue protein sequence, read N- to C-terminus: 4-diphosphocytidyl-2-C-methyl-D-erythritol kinase (307 aa).

Residue Lys9 is part of the active site. ATP is bound at residue 94 to 104 (PIGAGLAGGSS). Asp136 is an active-site residue.

The protein belongs to the GHMP kinase family. IspE subfamily.

The catalysed reaction is 4-CDP-2-C-methyl-D-erythritol + ATP = 4-CDP-2-C-methyl-D-erythritol 2-phosphate + ADP + H(+). Its pathway is isoprenoid biosynthesis; isopentenyl diphosphate biosynthesis via DXP pathway; isopentenyl diphosphate from 1-deoxy-D-xylulose 5-phosphate: step 3/6. Functionally, catalyzes the phosphorylation of the position 2 hydroxy group of 4-diphosphocytidyl-2C-methyl-D-erythritol. The protein is 4-diphosphocytidyl-2-C-methyl-D-erythritol kinase of Synechococcus sp. (strain CC9605).